We begin with the raw amino-acid sequence, 307 residues long: Porphobilinogen deaminase (307 aa).

The residue at position 239 (Cys239) is an S-(dipyrrolylmethanemethyl)cysteine.

This sequence belongs to the HMBS family. Monomer. Dipyrromethane serves as cofactor.

It catalyses the reaction 4 porphobilinogen + H2O = hydroxymethylbilane + 4 NH4(+). It participates in porphyrin-containing compound metabolism; protoporphyrin-IX biosynthesis; coproporphyrinogen-III from 5-aminolevulinate: step 2/4. Tetrapolymerization of the monopyrrole PBG into the hydroxymethylbilane pre-uroporphyrinogen in several discrete steps. This Campylobacter jejuni subsp. jejuni serotype O:2 (strain ATCC 700819 / NCTC 11168) protein is Porphobilinogen deaminase (hemC).